Reading from the N-terminus, the 180-residue chain is NAD(P)H-quinone oxidoreductase subunit I, chloroplastic (180 aa).

4Fe-4S ferredoxin-type domains are found at residues 55 to 84 (GRIH…VDWR) and 95 to 124 (LNYS…MTEE). Residues cysteine 64, cysteine 67, cysteine 70, cysteine 74, cysteine 104, cysteine 107, cysteine 110, and cysteine 114 each coordinate [4Fe-4S] cluster.

The protein belongs to the complex I 23 kDa subunit family. As to quaternary structure, NDH is composed of at least 16 different subunits, 5 of which are encoded in the nucleus. [4Fe-4S] cluster is required as a cofactor.

It is found in the plastid. The protein resides in the chloroplast thylakoid membrane. The enzyme catalyses a plastoquinone + NADH + (n+1) H(+)(in) = a plastoquinol + NAD(+) + n H(+)(out). It carries out the reaction a plastoquinone + NADPH + (n+1) H(+)(in) = a plastoquinol + NADP(+) + n H(+)(out). Its function is as follows. NDH shuttles electrons from NAD(P)H:plastoquinone, via FMN and iron-sulfur (Fe-S) centers, to quinones in the photosynthetic chain and possibly in a chloroplast respiratory chain. The immediate electron acceptor for the enzyme in this species is believed to be plastoquinone. Couples the redox reaction to proton translocation, and thus conserves the redox energy in a proton gradient. This is NAD(P)H-quinone oxidoreductase subunit I, chloroplastic from Liriodendron tulipifera (Tuliptree).